Reading from the N-terminus, the 581-residue chain is Arginine--tRNA ligase (581 aa).

The 'HIGH' region motif lies at 126 to 136 (PNLAKEMHVGH).

The protein belongs to the class-I aminoacyl-tRNA synthetase family. As to quaternary structure, monomer.

It is found in the cytoplasm. It carries out the reaction tRNA(Arg) + L-arginine + ATP = L-arginyl-tRNA(Arg) + AMP + diphosphate. This chain is Arginine--tRNA ligase, found in Shewanella sp. (strain MR-4).